Consider the following 118-residue polypeptide: UPF0449 protein C19orf25 (118 aa).

The residue at position 63 (Tyr63) is a Phosphotyrosine. Positions 81–109 (NVLRQRCELLQRAGEDLEREVAQMKQAAL) form a coiled coil.

This sequence belongs to the UPF0449 family.

The polypeptide is UPF0449 protein C19orf25 (C19orf25) (Homo sapiens (Human)).